The chain runs to 517 residues: MAPIALLSVSNKHGIVSLAESLHRMHGFQLLSSGGTAKVLEDAGLPVTRVAEHTGAAEILGGRVKTLHPRVHGGILAMRGDPDHEVDLEQHQIPPIDVVVVNLYPFRETVANPQVSWETAIENIDIGGPAMVRAAAKNHAHVAVLTRPDQYDRFLVALSDGVDGQLRRELALEAFEHTAAYDVAISHWMGVRLSEQASQWLEAIPLRQRLRYGENPHQQAAWYSAPKQGWGGAIQLQGKELSTNNLLDLEAALATVREFGYGTDGAHQAVQDAAVVVKHTNPCGVAIGTGVASALSRALDADRVSAFGGIVALNGLVDATTARELTSLFLECVVAPGFEPEAREILASKANLRLLELAPGAVDAAGRDHIRTILGGVLVQDQDDQLIDPTSWTVASKRAPTAEENDDLTFAWRLVRHVRSNAIVVARAGQSLGVGAGQMNRVGSARLALEAAGDQARGAVLASDGFFPFDDTVRLAANHGIRAVIQPGGSKRDADSIAVCDEFGLAMVLTGKRHFLH.

In terms of domain architecture, MGS-like spans 1–146 (MAPIALLSVS…KNHAHVAVLT (146 aa)).

This sequence belongs to the PurH family.

The catalysed reaction is (6R)-10-formyltetrahydrofolate + 5-amino-1-(5-phospho-beta-D-ribosyl)imidazole-4-carboxamide = 5-formamido-1-(5-phospho-D-ribosyl)imidazole-4-carboxamide + (6S)-5,6,7,8-tetrahydrofolate. It catalyses the reaction IMP + H2O = 5-formamido-1-(5-phospho-D-ribosyl)imidazole-4-carboxamide. The protein operates within purine metabolism; IMP biosynthesis via de novo pathway; 5-formamido-1-(5-phospho-D-ribosyl)imidazole-4-carboxamide from 5-amino-1-(5-phospho-D-ribosyl)imidazole-4-carboxamide (10-formyl THF route): step 1/1. It functions in the pathway purine metabolism; IMP biosynthesis via de novo pathway; IMP from 5-formamido-1-(5-phospho-D-ribosyl)imidazole-4-carboxamide: step 1/1. In Prochlorococcus marinus (strain MIT 9303), this protein is Bifunctional purine biosynthesis protein PurH.